We begin with the raw amino-acid sequence, 1353 residues long: DNA-directed RNA polymerase subunit beta' (1353 aa).

Positions 1–117 (MSDNRLFTSV…AFQKLNDLFK (117 aa)) are unknown. A DNA-directed RNA polymerase subunit beta' region spans residues 118 to 1353 (LYNHFPSISS…SELTKKTNQN (1236 aa)). Zn(2+) is bound by residues cysteine 189, cysteine 191, cysteine 203, and cysteine 206. The Mg(2+) site is built by aspartate 578, aspartate 580, and aspartate 582.

It belongs to the RNA polymerase beta' chain family. The RNAP catalytic core consists of 2 alpha, 1 beta, 1 beta' and 1 omega subunit. When a sigma factor is associated with the core the holoenzyme is formed, which can initiate transcription. Mg(2+) is required as a cofactor. Requires Zn(2+) as cofactor.

The enzyme catalyses RNA(n) + a ribonucleoside 5'-triphosphate = RNA(n+1) + diphosphate. DNA-dependent RNA polymerase catalyzes the transcription of DNA into RNA using the four ribonucleoside triphosphates as substrates. The chain is DNA-directed RNA polymerase subunit beta' from Aster yellows witches'-broom phytoplasma (strain AYWB).